Reading from the N-terminus, the 186-residue chain is ATP synthase subunit delta (186 aa).

This sequence belongs to the ATPase delta chain family. As to quaternary structure, F-type ATPases have 2 components, F(1) - the catalytic core - and F(0) - the membrane proton channel. F(1) has five subunits: alpha(3), beta(3), gamma(1), delta(1), epsilon(1). F(0) has three main subunits: a(1), b(2) and c(10-14). The alpha and beta chains form an alternating ring which encloses part of the gamma chain. F(1) is attached to F(0) by a central stalk formed by the gamma and epsilon chains, while a peripheral stalk is formed by the delta and b chains.

Its subcellular location is the cellular chromatophore membrane. Functionally, f(1)F(0) ATP synthase produces ATP from ADP in the presence of a proton or sodium gradient. F-type ATPases consist of two structural domains, F(1) containing the extramembraneous catalytic core and F(0) containing the membrane proton channel, linked together by a central stalk and a peripheral stalk. During catalysis, ATP synthesis in the catalytic domain of F(1) is coupled via a rotary mechanism of the central stalk subunits to proton translocation. In terms of biological role, this protein is part of the stalk that links CF(0) to CF(1). It either transmits conformational changes from CF(0) to CF(1) or is implicated in proton conduction. The sequence is that of ATP synthase subunit delta from Rhodobacter capsulatus (Rhodopseudomonas capsulata).